The primary structure comprises 118 residues: Peptidyl-tRNA hydrolase (118 aa).

This sequence belongs to the PTH2 family.

The protein resides in the cytoplasm. It carries out the reaction an N-acyl-L-alpha-aminoacyl-tRNA + H2O = an N-acyl-L-amino acid + a tRNA + H(+). Its function is as follows. The natural substrate for this enzyme may be peptidyl-tRNAs which drop off the ribosome during protein synthesis. This chain is Peptidyl-tRNA hydrolase, found in Thermococcus onnurineus (strain NA1).